A 582-amino-acid polypeptide reads, in one-letter code: Threonine--tRNA ligase (582 aa).

Residues Asp185–Pro478 are catalytic. The Zn(2+) site is built by Cys278, His329, and His455.

The protein belongs to the class-II aminoacyl-tRNA synthetase family. In terms of assembly, homodimer. The cofactor is Zn(2+).

The protein resides in the cytoplasm. The enzyme catalyses tRNA(Thr) + L-threonine + ATP = L-threonyl-tRNA(Thr) + AMP + diphosphate + H(+). Catalyzes the attachment of threonine to tRNA(Thr) in a two-step reaction: L-threonine is first activated by ATP to form Thr-AMP and then transferred to the acceptor end of tRNA(Thr). Also edits incorrectly charged L-seryl-tRNA(Thr). This is Threonine--tRNA ligase from Borrelia garinii subsp. bavariensis (strain ATCC BAA-2496 / DSM 23469 / PBi) (Borreliella bavariensis).